The sequence spans 287 residues: Pyridoxal kinase PdxY (287 aa).

Substrate contacts are provided by residues Ser9 and 44–45; that span reads MQ. ATP-binding residues include Asp111, Ala142, Glu147, and Lys180. Asp221 serves as a coordination point for substrate.

It belongs to the pyridoxine kinase family. PdxY subfamily. Homodimer. The cofactor is Mg(2+).

It carries out the reaction pyridoxal + ATP = pyridoxal 5'-phosphate + ADP + H(+). It functions in the pathway cofactor metabolism; pyridoxal 5'-phosphate salvage; pyridoxal 5'-phosphate from pyridoxal: step 1/1. Functionally, pyridoxal kinase involved in the salvage pathway of pyridoxal 5'-phosphate (PLP). Catalyzes the phosphorylation of pyridoxal to PLP. This chain is Pyridoxal kinase PdxY, found in Burkholderia thailandensis (strain ATCC 700388 / DSM 13276 / CCUG 48851 / CIP 106301 / E264).